A 157-amino-acid chain; its full sequence is 3-hydroxybutyryl-CoA dehydratase (157 aa).

The MaoC-like domain occupies 22–120 (KKEISSSDVV…IPERRRARLA (99 aa)).

It carries out the reaction (3R)-3-hydroxybutanoyl-CoA = (2E)-butenoyl-CoA + H2O. Functionally, involved in the regeneration of glyoxylate from a molecule of acetyl-CoA. This Methylorubrum extorquens (strain ATCC 14718 / DSM 1338 / JCM 2805 / NCIMB 9133 / AM1) (Methylobacterium extorquens) protein is 3-hydroxybutyryl-CoA dehydratase.